A 161-amino-acid polypeptide reads, in one-letter code: MTKKKVKPNSNTIALNKRARHDYFIEDEIEAGLELQGWEVKSMRAGKANISDSYVIFKNGEAFLFGASIQPLNVASTHIVCDPTRTRKLLLNKRELASLFGKANRDGFTIVALSLYWKSAWAKVKIGLAKGKKQQDKRDDIKEREWKVTKDRIMKNAHRRS.

It belongs to the SmpB family.

It is found in the cytoplasm. Required for rescue of stalled ribosomes mediated by trans-translation. Binds to transfer-messenger RNA (tmRNA), required for stable association of tmRNA with ribosomes. tmRNA and SmpB together mimic tRNA shape, replacing the anticodon stem-loop with SmpB. tmRNA is encoded by the ssrA gene; the 2 termini fold to resemble tRNA(Ala) and it encodes a 'tag peptide', a short internal open reading frame. During trans-translation Ala-aminoacylated tmRNA acts like a tRNA, entering the A-site of stalled ribosomes, displacing the stalled mRNA. The ribosome then switches to translate the ORF on the tmRNA; the nascent peptide is terminated with the 'tag peptide' encoded by the tmRNA and targeted for degradation. The ribosome is freed to recommence translation, which seems to be the essential function of trans-translation. The protein is SsrA-binding protein of Haemophilus influenzae (strain 86-028NP).